The primary structure comprises 188 residues: Elongation factor P (188 aa).

Belongs to the elongation factor P family.

It is found in the cytoplasm. It participates in protein biosynthesis; polypeptide chain elongation. In terms of biological role, involved in peptide bond synthesis. Stimulates efficient translation and peptide-bond synthesis on native or reconstituted 70S ribosomes in vitro. Probably functions indirectly by altering the affinity of the ribosome for aminoacyl-tRNA, thus increasing their reactivity as acceptors for peptidyl transferase. This is Elongation factor P from Pelodictyon phaeoclathratiforme (strain DSM 5477 / BU-1).